The primary structure comprises 282 residues: Protease HtpX homolog (282 aa).

2 helical membrane-spanning segments follow: residues 6-26 (TLVLMVFLSVFFIFVGSLIGG) and 29-49 (GATFALIMALGMNFFAYFFSH). His-130 contacts Zn(2+). Glu-131 is a catalytic residue. Residue His-134 coordinates Zn(2+). Transmembrane regions (helical) follow at residues 140–160 (ILISTIAATIAGAISYLAQMA) and 180–200 (IVALLMMIIAPLIAMIIQLAI). Glu-205 lines the Zn(2+) pocket.

Belongs to the peptidase M48B family. Zn(2+) serves as cofactor.

It is found in the cell inner membrane. The polypeptide is Protease HtpX homolog (Thermodesulfovibrio yellowstonii (strain ATCC 51303 / DSM 11347 / YP87)).